The sequence spans 342 residues: Holliday junction branch migration complex subunit RuvB (342 aa).

Positions 1-181 (MENRMVTPFD…FGMLCAMEFY (181 aa)) are large ATPase domain (RuvB-L). Residues Leu-20, Arg-21, Gly-62, Lys-65, Thr-66, Thr-67, 128–130 (EDY), Arg-171, Tyr-181, and Arg-218 each bind ATP. Thr-66 contacts Mg(2+). Positions 182 to 252 (TDEELMEIVV…GAKAALDLLE (71 aa)) are small ATPAse domain (RuvB-S). The segment at 255–342 (KEGLDKIDNK…KDNQVSIFNK (88 aa)) is head domain (RuvB-H). Arg-310 and Arg-315 together coordinate DNA.

Belongs to the RuvB family. Homohexamer. Forms an RuvA(8)-RuvB(12)-Holliday junction (HJ) complex. HJ DNA is sandwiched between 2 RuvA tetramers; dsDNA enters through RuvA and exits via RuvB. An RuvB hexamer assembles on each DNA strand where it exits the tetramer. Each RuvB hexamer is contacted by two RuvA subunits (via domain III) on 2 adjacent RuvB subunits; this complex drives branch migration. In the full resolvosome a probable DNA-RuvA(4)-RuvB(12)-RuvC(2) complex forms which resolves the HJ.

Its subcellular location is the cytoplasm. The enzyme catalyses ATP + H2O = ADP + phosphate + H(+). Functionally, the RuvA-RuvB-RuvC complex processes Holliday junction (HJ) DNA during genetic recombination and DNA repair, while the RuvA-RuvB complex plays an important role in the rescue of blocked DNA replication forks via replication fork reversal (RFR). RuvA specifically binds to HJ cruciform DNA, conferring on it an open structure. The RuvB hexamer acts as an ATP-dependent pump, pulling dsDNA into and through the RuvAB complex. RuvB forms 2 homohexamers on either side of HJ DNA bound by 1 or 2 RuvA tetramers; 4 subunits per hexamer contact DNA at a time. Coordinated motions by a converter formed by DNA-disengaged RuvB subunits stimulates ATP hydrolysis and nucleotide exchange. Immobilization of the converter enables RuvB to convert the ATP-contained energy into a lever motion, pulling 2 nucleotides of DNA out of the RuvA tetramer per ATP hydrolyzed, thus driving DNA branch migration. The RuvB motors rotate together with the DNA substrate, which together with the progressing nucleotide cycle form the mechanistic basis for DNA recombination by continuous HJ branch migration. Branch migration allows RuvC to scan DNA until it finds its consensus sequence, where it cleaves and resolves cruciform DNA. This is Holliday junction branch migration complex subunit RuvB from Clostridium botulinum (strain 657 / Type Ba4).